The primary structure comprises 93 residues: DNA-directed RNA polymerase subunit Rpo11 (93 aa).

It belongs to the archaeal Rpo11/eukaryotic RPB11/RPC19 RNA polymerase subunit family. As to quaternary structure, part of the RNA polymerase complex.

The protein localises to the cytoplasm. It catalyses the reaction RNA(n) + a ribonucleoside 5'-triphosphate = RNA(n+1) + diphosphate. Its function is as follows. DNA-dependent RNA polymerase (RNAP) catalyzes the transcription of DNA into RNA using the four ribonucleoside triphosphates as substrates. This is DNA-directed RNA polymerase subunit Rpo11 from Methanocella arvoryzae (strain DSM 22066 / NBRC 105507 / MRE50).